The sequence spans 312 residues: Ribosomal protein L11 methyltransferase (312 aa).

S-adenosyl-L-methionine-binding residues include Thr162, Gly183, Asp205, and Asn248.

It belongs to the methyltransferase superfamily. PrmA family.

It localises to the cytoplasm. It catalyses the reaction L-lysyl-[protein] + 3 S-adenosyl-L-methionine = N(6),N(6),N(6)-trimethyl-L-lysyl-[protein] + 3 S-adenosyl-L-homocysteine + 3 H(+). Its function is as follows. Methylates ribosomal protein L11. The chain is Ribosomal protein L11 methyltransferase from Exiguobacterium sp. (strain ATCC BAA-1283 / AT1b).